The following is a 574-amino-acid chain: MLPRALTLSALLALLLAIYLALAPARLSCRCRSWEQCWPSLEAWSHLNASLNSHLVDLRPIASVCHEPILDQPACDIVRRMSNSGRWRTGQPGALINSFWESGFGSNETCSLSSGQENLCHQGRIPLYAAVVESTQEVQTAVKFAREHNLRLVIRNTGHDGAGSSSGPDSFQIFTHRLSDILYHENFRITGSNTSVGPAVSIGAGVLFGDLYVHGGQKGFIVTGGDSATVGAAGGFTQGGGVPGFLGHTWGLAADNVLEFEIVTATGNLVIANAGQHPDLFWALRGGGGGTFGVAVRVTMRTYPDHPAVKSTISITGDGQSPSFWSEGIAGLLTVLQSLNRQGTAGVFRLWQTPAGLLGASTEVYFLNQTEVKDASSVIKSTLGNASDIYIISSNALDTLSSDVEADAPTINELFGSTLVSNGLFQSESGPKLIAERMSQIGLNDGEWILTSNLGGQVNDNKRANTPLHPAWQSSAQLVSLVVNVDTAPGARDRAMRRLTNELMPRLYALDPSQRVSYRNMGDPNEPHFKEVYWGATNYDRLVQIKRDWDPKDLFISRVGIGSERWDFEGFCKV.

Residues 1-25 form the signal peptide; the sequence is MLPRALTLSALLALLLAIYLALAPA. Residues asparagine 48, asparagine 107, asparagine 193, asparagine 368, and asparagine 385 are each glycosylated (N-linked (GlcNAc...) asparagine). The FAD-binding PCMH-type domain occupies 121–305; the sequence is HQGRIPLYAA…VRVTMRTYPD (185 aa).

The protein belongs to the oxygen-dependent FAD-linked oxidoreductase family. The cofactor is FAD.

The enzyme catalyses peniprequinolone + A = yaequinolone E + AH2. It participates in secondary metabolite biosynthesis. Its pathway is alkaloid biosynthesis. It functions in the pathway mycotoxin biosynthesis. Functionally, FAD-linked oxidoreductase; part of the gene cluster that mediates the biosynthesis of penigequinolones, potent insecticidal alkaloids that contain a highly modified 10-carbon prenyl group. The first stage is catalyzed by the nonribosomal peptide synthetase penN that condenses anthranilic acid and O-methyl-L-tyrosine to produce 4'-methoxycyclopeptin. 4'-methoxycyclopeptin is then converted to 4'-methoxydehydrocyclopeptin by the ketoglutarate-dependent dioxygenase penM through dehydrogenation to form a double bond between C-alpha and C-beta of the O-methyltyrosine side chain. PenM also converts its first product methoxydehydrocyclopeptin to 4'-methoxycyclopenin. The following conversion of 4'methoxycyclopenin into 4'-methoxyviridicatin is catalyzed by the cyclopenase penL. 4'-methoxyviridicatin is the precursor of quinolone natural products, and is further converted to quinolinone B. The prenyltransferase penI then catalyzes the canonical Friedel-Crafts alkylation of quinolinone B with dimethylallyl cation to yield dimethylallyl quinolone, which is subjected to FAD-dependent dehydrogenation by the FAD-linked oxidoreductase penH to yield conjugated aryl diene. The delta(3') double bond then serves as the site of the second alkylation with DMAPP catalyzed by the prenyltransferase penG to yield a carbenium ion intermediate, which can be attacked by H(2)O to yield a styrenyl quinolone containing a C3'-hydroxyprenyl chain, or undergo cyclization to yield yaequinolones J1 and J2. The conversion of the styrenyl quinolone into the tetrahydrofuran-containing yaequinolone C is performed by the FAD-dependent monooxygenase penE and involves epoxidation of the terminal C7'-C8' olefin, followed by epoxide ring opening initiated by the C3' hydroxyl group. The predicted cysteine hydrolase penJ acts as an epoxide hydrolase that enhances the rate of the 5-exo-tet cyclization step, increasing the yield of yaequinolone C. PenF catalyzes the cationic rearrangement of the epoxide formed by penE (before ring opening to produce yaequinolone C) into yaequinolone D. Finally, the short-chain dehydrogenase/reductase (SDR)-like reductase penD, catalyzes both the dehydration of yaequinolone D and the reduction of the resulting oxonium to yield penigequinolone. This chain is FAD-linked oxidoreductase penH, found in Penicillium thymicola.